Reading from the N-terminus, the 88-residue chain is MRLFISLPVLIVVLAMALEGPAPAQATPDLSSTFENLPDKLKEFGNTLEDKARAAIEHIKQKEFLTKTRTWISETFGKMKEKIKTTFA.

An N-terminal signal peptide occupies residues 1-26 (MRLFISLPVLIVVLAMALEGPAPAQA).

It belongs to the apolipoprotein C1 family.

Its subcellular location is the secreted. Inhibitor of lipoprotein binding to the low density lipoprotein (LDL) receptor, LDL receptor-related protein, and very low density lipoprotein (VLDL) receptor. Associates with high density lipoproteins (HDL) and the triacylglycerol-rich lipoproteins in the plasma and makes up about 10% of the protein of the VLDL and 2% of that of HDL. Appears to interfere directly with fatty acid uptake and is also the major plasma inhibitor of cholesteryl ester transfer protein (CETP). Modulates the interaction of APOE with beta-migrating VLDL and inhibits binding of beta-VLDL to the LDL receptor-related protein. Binds free fatty acids and reduces their intracellular esterification. The chain is Apolipoprotein C-I (APOC1) from Myodes glareolus (Bank vole).